A 276-amino-acid polypeptide reads, in one-letter code: Checkpoint protein HUS1B (276 aa).

This sequence belongs to the HUS1 family. Interacts with RAD1 and RAD9B.

The chain is Checkpoint protein HUS1B (Hus1b) from Mus musculus (Mouse).